Reading from the N-terminus, the 171-residue chain is Crossover junction endodeoxyribonuclease RuvC (171 aa).

Active-site residues include Asp-7, Glu-67, and Asp-139. 3 residues coordinate Mg(2+): Asp-7, Glu-67, and Asp-139.

This sequence belongs to the RuvC family. In terms of assembly, homodimer which binds Holliday junction (HJ) DNA. The HJ becomes 2-fold symmetrical on binding to RuvC with unstacked arms; it has a different conformation from HJ DNA in complex with RuvA. In the full resolvosome a probable DNA-RuvA(4)-RuvB(12)-RuvC(2) complex forms which resolves the HJ. Requires Mg(2+) as cofactor.

The protein localises to the cytoplasm. It carries out the reaction Endonucleolytic cleavage at a junction such as a reciprocal single-stranded crossover between two homologous DNA duplexes (Holliday junction).. Functionally, the RuvA-RuvB-RuvC complex processes Holliday junction (HJ) DNA during genetic recombination and DNA repair. Endonuclease that resolves HJ intermediates. Cleaves cruciform DNA by making single-stranded nicks across the HJ at symmetrical positions within the homologous arms, yielding a 5'-phosphate and a 3'-hydroxyl group; requires a central core of homology in the junction. The consensus cleavage sequence is 5'-(A/T)TT(C/G)-3'. Cleavage occurs on the 3'-side of the TT dinucleotide at the point of strand exchange. HJ branch migration catalyzed by RuvA-RuvB allows RuvC to scan DNA until it finds its consensus sequence, where it cleaves and resolves the cruciform DNA. This is Crossover junction endodeoxyribonuclease RuvC from Geotalea uraniireducens (strain Rf4) (Geobacter uraniireducens).